A 1497-amino-acid chain; its full sequence is Dual oxidase 1 (1497 aa).

An N-terminal signal peptide occupies residues 1 to 21 (MRSKHVLYIAILFSSIFGGKG). Residues 22–587 (IQQNEEFQRY…MQSTYWTDND (566 aa)) lie on the Extracellular side of the membrane. Residues 26–590 (EEFQRYDGWY…TYWTDNDTTY (565 aa)) are peroxidase-like; mediates peroxidase activity. N-linked (GlcNAc...) asparagine glycosylation is found at Asn-66, Asn-305, Asn-567, and Asn-586. A helical transmembrane segment spans residues 588 to 608 (TTYVFTLIGLACVPLICYGIG). Residues 609–986 (RYLVNRRIAI…VSAFLETYRQ (378 aa)) are Cytoplasmic-facing. EF-hand domains follow at residues 817 to 852 (ANNEFVKRMFAMTAKHNEDSLSFNEFLTVLREFVNA) and 853 to 888 (PQKQKLQTLFKMCDLEGKNKVLRKDLAELVKSLNQT). A helical transmembrane segment spans residues 987–1007 (HVFIVFCFVAINLVLFFERFW). The Extracellular portion of the chain corresponds to 1008–1024 (HYRYMAENRDLRRVMGA). A helical transmembrane segment spans residues 1025–1045 (GIAITRGAAGALSFCMALILL). The Ferric oxidoreductase domain occupies 1030 to 1210 (RGAAGALSFC…FVIDRIIGLM (181 aa)). Topologically, residues 1046–1068 (TVCRNIITLLRETVIAQYIPFDS) are cytoplasmic. A helical transmembrane segment spans residues 1069–1089 (AIAFHKIVALFAAFWATLHTV). Over 1090–1134 (GHCVNFYHVGTQSQEGLACLFQEAFFGSNFLPSISYWFFSTITGL) the chain is Extracellular. The chain crosses the membrane as a helical span at residues 1135-1155 (TGIALVAVMCIIYVFALPCFI). At 1156-1163 (KRAYHAFR) the chain is on the cytoplasmic side. Residues 1164-1184 (LTHLLNIAFYALTLLHGLPKL) form a helical membrane-spanning segment. Residues 1185–1189 (LDSPK) are Extracellular-facing. The chain crosses the membrane as a helical span at residues 1190 to 1210 (FGYYVVGPIVLFVIDRIIGLM). The 108-residue stretch at 1211–1318 (QYYKKLEIVN…KGPYGDGNQE (108 aa)) folds into the FAD-binding FR-type domain. Residues 1211–1497 (QYYKKLEIVN…PSFAHRFETF (287 aa)) lie on the Cytoplasmic side of the membrane.

It in the N-terminal section; belongs to the peroxidase family. In terms of assembly, interacts with doxa-1 and tsp-15. Interacts with rho-1. As to expression, expressed in hypodermal cells.

The protein resides in the membrane. The enzyme catalyses NADH + O2 + H(+) = H2O2 + NAD(+). It catalyses the reaction NADPH + O2 + H(+) = H2O2 + NADP(+). Peroxidase activity is inhibited by aminobenzohydrazide. Functionally, plays a role in cuticle biogenesis. In complex with doxa-1 and tsp-15, produces reactive oxygen species (ROS), which are probably used by mlt-7 for tyrosine cross-linking, thus stabilizing cuticular extracellular matrix. May regulate the production of ROS by playing a role in modulating proline catabolism. Required in combination with mlt-7 for correct formation of cross-links in cuticle collagens. Association with the GTPase rho-1 promotes ROS production and this interaction may be modulated by memo-1, in order to control the oxidative stress response and longevity. This is Dual oxidase 1 from Caenorhabditis elegans.